A 455-amino-acid chain; its full sequence is Homeobox protein 14 (455 aa).

5 stretches are compositionally biased toward low complexity: residues 1–16, 24–39, 81–118, 179–239, and 263–294; these read MNHN…KNNS, SSRS…SSSG, TTTT…ESPN, ESPN…SPSF, and NNNN…TNNN. Disordered stretches follow at residues 1–53, 67–121, 178–239, and 258–296; these read MNHN…SSIN, KQTK…NCNK, SESP…SPSF, and TLLS…NNGD. DNA-binding regions (homeobox) lie at residues 310-369 and 372-431; these read KSGQ…SKSG and SYAK…NKLS. Positions 431–455 are disordered; sequence SSKANQDNDNNNNNENNDDSYSDEG. Over residues 435 to 445 the composition is skewed to low complexity; the sequence is NQDNDNNNNNE. Positions 446 to 455 are enriched in acidic residues; the sequence is NNDDSYSDEG.

The protein resides in the nucleus. Putative transcription factor. The chain is Homeobox protein 14 (hbx14) from Dictyostelium discoideum (Social amoeba).